A 491-amino-acid chain; its full sequence is Ketol-acid reductoisomerase (NADP(+)) (491 aa).

Residues 15–208 (AQLGKCRFMA…GGHRAGVLES (194 aa)) enclose the KARI N-terminal Rossmann domain. NADP(+)-binding positions include 45–48 (CGAQ), R68, R76, S78, and 108–110 (DKQ). H132 is an active-site residue. G158 is a binding site for NADP(+). KARI C-terminal knotted domains are found at residues 209 to 344 (SFVA…NAPQ) and 345 to 484 (FEGK…MTDM). D217, E221, E389, and E393 together coordinate Mg(2+). S414 lines the substrate pocket.

Belongs to the ketol-acid reductoisomerase family. It depends on Mg(2+) as a cofactor.

It catalyses the reaction (2R)-2,3-dihydroxy-3-methylbutanoate + NADP(+) = (2S)-2-acetolactate + NADPH + H(+). It carries out the reaction (2R,3R)-2,3-dihydroxy-3-methylpentanoate + NADP(+) = (S)-2-ethyl-2-hydroxy-3-oxobutanoate + NADPH + H(+). Its pathway is amino-acid biosynthesis; L-isoleucine biosynthesis; L-isoleucine from 2-oxobutanoate: step 2/4. It participates in amino-acid biosynthesis; L-valine biosynthesis; L-valine from pyruvate: step 2/4. Involved in the biosynthesis of branched-chain amino acids (BCAA). Catalyzes an alkyl-migration followed by a ketol-acid reduction of (S)-2-acetolactate (S2AL) to yield (R)-2,3-dihydroxy-isovalerate. In the isomerase reaction, S2AL is rearranged via a Mg-dependent methyl migration to produce 3-hydroxy-3-methyl-2-ketobutyrate (HMKB). In the reductase reaction, this 2-ketoacid undergoes a metal-dependent reduction by NADPH to yield (R)-2,3-dihydroxy-isovalerate. This is Ketol-acid reductoisomerase (NADP(+)) from Serratia proteamaculans (strain 568).